Here is a 392-residue protein sequence, read N- to C-terminus: MTAIIRQFLRLEASGGILLIVAAIIALIMANTPLSALYNEFLSIPIMIKFGALELDKPLILWVNDALMAIFFLVVGLEVKRELKEGSLAQRDRAIFPAIAAVGGMLAPALIYLFFNHGDAIGQQGWAIPAATDIAFALGVMALLGRRVPVELKVFLLALAIIDDLGVIVIIALFYSKSVALVPLLLAALITIMLFILNWRKVSNTAVYLVLGFILWVCILKSGIHATIAGVIVGFLIPLRDKEGASPSEELEHVLHPWVAYLILPLFAFSNAGVSLNGVTLDGMLSTLPVGIALGLFLGKPIGIFLFSWVSVKLGIAKLPDAINLKQIFAVSVLCGIGFTMSIFIAGLAFEGAIEAYNTYSKLGILVGSTMAAVVGYLLLNSVLPKLKQKQK.

Transmembrane regions (helical) follow at residues 17-37 (ILLI…LSAL), 59-79 (LILW…GLEV), 95-115 (IFPA…YLFF), 125-145 (GWAI…ALLG), 154-174 (VFLL…IALF), 179-199 (VALV…ILNW), 213-233 (FILW…GVIV), 254-274 (VLHP…NAGV), 290-310 (VGIA…FSWV), 328-348 (IFAV…IAGL), and 363-383 (LGIL…LNSV).

This sequence belongs to the NhaA Na(+)/H(+) (TC 2.A.33) antiporter family.

The protein resides in the cell inner membrane. The catalysed reaction is Na(+)(in) + 2 H(+)(out) = Na(+)(out) + 2 H(+)(in). Functionally, na(+)/H(+) antiporter that extrudes sodium in exchange for external protons. This chain is Na(+)/H(+) antiporter NhaA, found in Proteus mirabilis (strain HI4320).